A 352-amino-acid chain; its full sequence is Lipoyl synthase (352 aa).

The segment at 1 to 21 is disordered; the sequence is MTSVDTPTPHGGTPAPAPATA. Cys-71, Cys-76, Cys-82, Cys-97, Cys-101, Cys-104, and Ser-308 together coordinate [4Fe-4S] cluster. The 215-residue stretch at 83 to 297 folds into the Radical SAM core domain; the sequence is WEDREATFLI…SRVAEEIGFA (215 aa).

It belongs to the radical SAM superfamily. Lipoyl synthase family. It depends on [4Fe-4S] cluster as a cofactor.

It is found in the cytoplasm. It catalyses the reaction [[Fe-S] cluster scaffold protein carrying a second [4Fe-4S](2+) cluster] + N(6)-octanoyl-L-lysyl-[protein] + 2 oxidized [2Fe-2S]-[ferredoxin] + 2 S-adenosyl-L-methionine + 4 H(+) = [[Fe-S] cluster scaffold protein] + N(6)-[(R)-dihydrolipoyl]-L-lysyl-[protein] + 4 Fe(3+) + 2 hydrogen sulfide + 2 5'-deoxyadenosine + 2 L-methionine + 2 reduced [2Fe-2S]-[ferredoxin]. It participates in protein modification; protein lipoylation via endogenous pathway; protein N(6)-(lipoyl)lysine from octanoyl-[acyl-carrier-protein]: step 2/2. Functionally, catalyzes the radical-mediated insertion of two sulfur atoms into the C-6 and C-8 positions of the octanoyl moiety bound to the lipoyl domains of lipoate-dependent enzymes, thereby converting the octanoylated domains into lipoylated derivatives. This chain is Lipoyl synthase, found in Nocardia farcinica (strain IFM 10152).